We begin with the raw amino-acid sequence, 85 residues long: Putative N.vectensis toxin 1 9 (85 aa).

The signal sequence occupies residues 1–20 (MASFKIVIVCLALLVAVASA). A propeptide spanning residues 21 to 36 (RRRDMMSDDELDYHFS) is cleaved from the precursor. Cystine bridges form between Cys-42–Cys-82, Cys-44–Cys-72, and Cys-65–Cys-83.

Belongs to the sea anemone sodium channel inhibitory toxin family. Type II subfamily. In terms of tissue distribution, expressed in ectodermal glands and in clumps outside of the extodermal layer. Is not expressed in nematocytes. In adult female tissues, shows similar expression levels in mesenteries (gametes-producing tissue), tentacles, pharynx and physa.

Its subcellular location is the secreted. Functionally, binds to site 3 of voltage-gated sodium channels and inhibits the inactivation process. Is highly active on DmNav1/TipE (drosophila) and is only extremely weakly active on rat Nav1.4-beta-1/SCN4A-SCN1B, and on human Nav1.5-beta-1/SCN5A-beta-1. This reveals high specificity for arthropod over mammalian channels. In vivo, when released into the medium, this recombinant toxin induces impaired swimming, paralysis and death of the crustacean A.nauplii within several hours. Also causes paralysis of cherry shrimps immediately after injection at very low doses. Its effect on zebrafish (D.rerio) larvae is also rapid, since it induces tail twitching accompanied by impaired swimming after 20 minutes and complete paralysis within 45 minutes. It has also been observed to cause death of zebrafish larvae within 1 hour. The polypeptide is Putative N.vectensis toxin 1 9 (Nematostella vectensis (Starlet sea anemone)).